The primary structure comprises 183 residues: tRNA-splicing endonuclease (183 aa).

Catalysis depends on residues Tyr120, His128, and Lys159.

This sequence belongs to the tRNA-intron endonuclease family. Archaeal short subfamily. Homotetramer; although the tetramer contains four active sites, only two participate in the cleavage. Therefore, it should be considered as a dimer of dimers.

It catalyses the reaction pretRNA = a 3'-half-tRNA molecule with a 5'-OH end + a 5'-half-tRNA molecule with a 2',3'-cyclic phosphate end + an intron with a 2',3'-cyclic phosphate and a 5'-hydroxyl terminus.. In terms of biological role, endonuclease that removes tRNA introns. Cleaves pre-tRNA at the 5'- and 3'-splice sites to release the intron. The products are an intron and two tRNA half-molecules bearing 2',3' cyclic phosphate and 5'-OH termini. Recognizes a pseudosymmetric substrate in which 2 bulged loops of 3 bases are separated by a stem of 4 bp. The chain is tRNA-splicing endonuclease from Pyrobaculum aerophilum (strain ATCC 51768 / DSM 7523 / JCM 9630 / CIP 104966 / NBRC 100827 / IM2).